The sequence spans 155 residues: Small ribosomal subunit protein uS7 (155 aa).

Belongs to the universal ribosomal protein uS7 family. Part of the 30S ribosomal subunit. Contacts proteins S9 and S11.

In terms of biological role, one of the primary rRNA binding proteins, it binds directly to 16S rRNA where it nucleates assembly of the head domain of the 30S subunit. Is located at the subunit interface close to the decoding center, probably blocks exit of the E-site tRNA. This is Small ribosomal subunit protein uS7 from Xylella fastidiosa (strain 9a5c).